Consider the following 412-residue polypeptide: Multifunctional CCA protein (412 aa).

Positions 8 and 11 each coordinate ATP. The CTP site is built by Gly8 and Arg11. The Mg(2+) site is built by Asp21 and Asp23. The ATP site is built by Arg91, Arg137, and Arg140. Residues Arg91, Arg137, and Arg140 each coordinate CTP. Positions 228–329 (TGIHTLMTLS…VKLFDSIDAW (102 aa)) constitute an HD domain.

Belongs to the tRNA nucleotidyltransferase/poly(A) polymerase family. Bacterial CCA-adding enzyme type 1 subfamily. Monomer. Can also form homodimers and oligomers. It depends on Mg(2+) as a cofactor. Ni(2+) is required as a cofactor.

It carries out the reaction a tRNA precursor + 2 CTP + ATP = a tRNA with a 3' CCA end + 3 diphosphate. It catalyses the reaction a tRNA with a 3' CCA end + 2 CTP + ATP = a tRNA with a 3' CCACCA end + 3 diphosphate. Catalyzes the addition and repair of the essential 3'-terminal CCA sequence in tRNAs without using a nucleic acid template. Adds these three nucleotides in the order of C, C, and A to the tRNA nucleotide-73, using CTP and ATP as substrates and producing inorganic pyrophosphate. tRNA 3'-terminal CCA addition is required both for tRNA processing and repair. Also involved in tRNA surveillance by mediating tandem CCA addition to generate a CCACCA at the 3' terminus of unstable tRNAs. While stable tRNAs receive only 3'-terminal CCA, unstable tRNAs are marked with CCACCA and rapidly degraded. This is Multifunctional CCA protein from Shigella sonnei (strain Ss046).